The sequence spans 162 residues: Peptidyl-prolyl cis-trans isomerase (162 aa).

The PPIase cyclophilin-type domain occupies 16 to 162; that stretch reads KTAYATIKTN…IESVVFSPSL (147 aa).

Belongs to the cyclophilin-type PPIase family.

It carries out the reaction [protein]-peptidylproline (omega=180) = [protein]-peptidylproline (omega=0). Functionally, PPIases accelerate the folding of proteins. It catalyzes the cis-trans isomerization of proline imidic peptide bonds in oligopeptides. The sequence is that of Peptidyl-prolyl cis-trans isomerase (ppiA) from Helicobacter pylori (strain J99 / ATCC 700824) (Campylobacter pylori J99).